We begin with the raw amino-acid sequence, 186 residues long: Dual-action ribosomal maturation protein DarP (186 aa).

This sequence belongs to the DarP family.

The protein resides in the cytoplasm. Member of a network of 50S ribosomal subunit biogenesis factors which assembles along the 30S-50S interface, preventing incorrect 23S rRNA structures from forming. Promotes peptidyl transferase center (PTC) maturation. This Proteus mirabilis (strain HI4320) protein is Dual-action ribosomal maturation protein DarP.